The primary structure comprises 609 residues: Probable translation initiation factor IF-2 (609 aa).

Positions 12 to 230 (LRQPIVAVLG…VLAGLAQRYM (219 aa)) constitute a tr-type G domain. Positions 21–28 (GHVDHGKT) are G1. 21–28 (GHVDHGKT) is a binding site for GTP. The segment at 46–50 (QITQH) is G2. A G3 region spans residues 86–89 (DTPG). Residues 86-90 (DTPGH) and 140-143 (NKID) each bind GTP. The interval 140–143 (NKID) is G4. Residues 208 to 210 (SAK) are G5.

This sequence belongs to the TRAFAC class translation factor GTPase superfamily. Classic translation factor GTPase family. IF-2 subfamily.

Function in general translation initiation by promoting the binding of the formylmethionine-tRNA to ribosomes. Seems to function along with eIF-2. The protein is Probable translation initiation factor IF-2 of Ignicoccus hospitalis (strain KIN4/I / DSM 18386 / JCM 14125).